We begin with the raw amino-acid sequence, 170 residues long: NADH-ubiquinone oxidoreductase chain 2 (170 aa).

4 helical membrane passes run 24 to 44, 67 to 87, 101 to 121, and 150 to 170; these read LLWM…IMMF, FLIF…GFLP, LFIL…YLRL, and LILN…YMIL.

Belongs to the complex I subunit 2 family.

It is found in the mitochondrion inner membrane. It carries out the reaction a ubiquinone + NADH + 5 H(+)(in) = a ubiquinol + NAD(+) + 4 H(+)(out). Its function is as follows. Core subunit of the mitochondrial membrane respiratory chain NADH dehydrogenase (Complex I) that is believed to belong to the minimal assembly required for catalysis. Complex I functions in the transfer of electrons from NADH to the respiratory chain. The immediate electron acceptor for the enzyme is believed to be ubiquinone. The sequence is that of NADH-ubiquinone oxidoreductase chain 2 (ND2) from Anopheles albimanus (New world malaria mosquito).